Here is a 416-residue protein sequence, read N- to C-terminus: MKHRPVHERQSSTESKNLKETTQLIMQSSSDHTHHQLGSNDSPSACMSLPVPQLSAEGSCTVGDVTVDLSSQDSQHVARSNSRRVRPSTHGRSPSRHGHTHSHDASGPEDANDDSREQSNSISEVFHLYKWLEKSFPYILIFSAKLVVQHITGISVGIGLLTTFLYANKCIVNQVFLRDKCSKLQCLWVLVFLLFSSFLLYYTFSSQALYYSLVFMNPSLGPLHFFDALWVVGITDFIGKFFFMGLKCIILLVPSFVMSHKSKGYWYMALEELAQCYCTLVSTPVWFRYLIDYGNLDSGAEWHFGILLALLYLILKILIIFGQRKTSSDCLRLFLSQPNYGTTATKRQCSEADGMCAICQAEFTKPIALICQHVFCEECISSWFNKEKTCPLCRTLISNHSHKWKDGATSLQLRIF.

Disordered regions lie at residues 1–50 (MKHR…MSLP) and 68–117 (DLSS…DSRE). Over residues 7–19 (HERQSSTESKNLK) the composition is skewed to basic and acidic residues. Composition is skewed to polar residues over residues 20 to 45 (ETTQ…SPSA) and 68 to 80 (DLSS…VARS). Positions 81-100 (NSRRVRPSTHGRSPSRHGHT) are enriched in basic residues. 6 consecutive transmembrane segments (helical) span residues 146 to 166 (LVVQ…TFLY), 184 to 204 (LQCL…YYTF), 214 to 234 (VFMN…VVGI), 237 to 257 (FIGK…PSFV), 265 to 287 (YWYM…PVWF), and 302 to 322 (WHFG…IIFG). Residues 349–400 (CSEADGMCAICQAEFTKPIALICQHVFCEECISSWFNKEKTCPLCRTLISNH) are required for ubiquitin ligase activity and for protection against ER stress-induced cell death. Residues 356–394 (CAICQAEFTKPIALICQHVFCEECISSWFNKEKTCPLCR) form an RING-type zinc finger.

The protein resides in the endoplasmic reticulum membrane. The enzyme catalyses S-ubiquitinyl-[E2 ubiquitin-conjugating enzyme]-L-cysteine + [acceptor protein]-L-lysine = [E2 ubiquitin-conjugating enzyme]-L-cysteine + N(6)-ubiquitinyl-[acceptor protein]-L-lysine.. It functions in the pathway protein modification; protein ubiquitination. In terms of biological role, E3 ubiquitin-protein ligase that acts in the endoplasmic reticulum (ER)-associated degradation (ERAD) pathway, which targets misfolded proteins that accumulate in the endoplasmic reticulum (ER) for ubiquitination and subsequent proteasome-mediated degradation. Protects cells from ER stress-induced apoptosis. This Xenopus laevis (African clawed frog) protein is E3 ubiquitin-protein ligase RNFT1 (rnft1).